Reading from the N-terminus, the 616-residue chain is Chaperone protein HscA (616 aa).

Belongs to the heat shock protein 70 family.

Functionally, chaperone involved in the maturation of iron-sulfur cluster-containing proteins. Has a low intrinsic ATPase activity which is markedly stimulated by HscB. Involved in the maturation of IscU. The chain is Chaperone protein HscA from Escherichia coli (strain SMS-3-5 / SECEC).